A 209-amino-acid polypeptide reads, in one-letter code: Flavin prenyltransferase UbiX (209 aa).

FMN is bound by residues 13–15, Ser-39, 104–107, Cys-116, and Arg-139; these read GAS and STGT. The dimethylallyl phosphate site is built by Tyr-169 and Arg-185.

The protein belongs to the UbiX/PAD1 family.

It catalyses the reaction dimethylallyl phosphate + FMNH2 = prenylated FMNH2 + phosphate. Flavin prenyltransferase that catalyzes the synthesis of the prenylated FMN cofactor (prenyl-FMN) for 4-hydroxy-3-polyprenylbenzoic acid decarboxylase UbiD. The prenyltransferase is metal-independent and links a dimethylallyl moiety from dimethylallyl monophosphate (DMAP) to the flavin N5 and C6 atoms of FMN. The protein is Flavin prenyltransferase UbiX of Pseudomonas aeruginosa (strain ATCC 15692 / DSM 22644 / CIP 104116 / JCM 14847 / LMG 12228 / 1C / PRS 101 / PAO1).